Consider the following 553-residue polypeptide: Glycine betaine/proline/choline transporter VP1723 (553 aa).

12 consecutive transmembrane segments (helical) span residues 43 to 63 (NRVFAISGMAIVLFVVATLTF), 85 to 105 (FFLASGNVFVIVCLVLIVTPL), 122 to 142 (AGWLAMLFAAGMGIGLVFFGV), 191 to 211 (WALHPWSIYALLALGLAIFSF), 231 to 251 (VWGWVGHIIDILAVVATVFGL), 278 to 298 (TQVVLIVVITALALISVVAGL), 310 to 330 (MILAAMLLFFVIIVGPTMAIL), 362 to 382 (WTAFYWAWWISWSPFVGMFIA), 393 to 413 (FIICVILIPSTVCVLWMTAFG), 443 to 463 (VMPFAEITSVVGIILVVVFFI), 490 to 510 (VFWCTFEGLVAIALMLGGGLA), and 515 to 535 (MAVTTGLPFTIVLLVATVSLI).

Belongs to the BCCT transporter (TC 2.A.15) family.

The protein resides in the cell inner membrane. In terms of biological role, involved in the uptake of osmoprotectants. Can transport glycine betaine, proline and choline. The chain is Glycine betaine/proline/choline transporter VP1723 from Vibrio parahaemolyticus serotype O3:K6 (strain RIMD 2210633).